Here is a 214-residue protein sequence, read N- to C-terminus: Dynein axonemal assembly factor 6 (214 aa).

Disordered regions lie at residues 1–22 (MESENMDSENMKTENMESQNVD) and 34–68 (ALSKLLNPEEEDDSDYGQTNGLSTIGAMGPGNIGP).

It belongs to the PIH1 family. Interacts with HSPA1A/B and HSP90AA1. Interacts with DNAAF2 and DNAAF4. Interacts wuth DNAI2. In terms of tissue distribution, expressed in testis, small intestine, prostate, adrenal gland, spleen, lung, bladder, breast and ovary. Expressed in ciliated epithelial cells.

It localises to the cytoplasm. The protein localises to the golgi apparatus. It is found in the trans-Golgi network. In terms of biological role, plays a role in cytoplasmic pre-assembly of axonemal dynein. This Homo sapiens (Human) protein is Dynein axonemal assembly factor 6.